A 419-amino-acid polypeptide reads, in one-letter code: MINRFSIEKVKGLEIIDSRGNPTIRVFVRTNDGVESFGDAPAGASKGTREAIEVRDENGLTVKRAVDIANYIIDPALHGIDVREQGIIDKILIDIDSTENKSKLGGNTIIATSIAALKTASKALGLEVFKYIAGPRLPKIPIPLLNIINGGLHAGNKLKIQEFIILPIKFNTFKEAFFAAIEVYRNLKGLISERYGKIYTAVGDEGGFSPPLEETREALDLIYTSINNAGYQGKIYMGMDPAASDFYDPKKEKYIIDGKELNPTQLLEFYLDLAKEYPIVYLEDPFEENSFDMFGELQNKLNSTIVIGDDLYTTNIKYLKIGIEKRSTKGVVVKPNQVGTISETFEFTNLARRNSIKLVTSHRSGETEDNFIAEFAVGIESDFIKTGAPARGERTSKYNKLLEIENKFGLEYGGKYFYL.

Residue Gln161 coordinates (2R)-2-phosphoglycerate. Glu205 acts as the Proton donor in catalysis. The Mg(2+) site is built by Asp240, Glu283, and Asp309. Residues Lys334, Arg363, Ser364, and Lys385 each coordinate (2R)-2-phosphoglycerate. The active-site Proton acceptor is Lys334.

This sequence belongs to the enolase family. It depends on Mg(2+) as a cofactor.

The protein resides in the cytoplasm. It localises to the secreted. Its subcellular location is the cell surface. The catalysed reaction is (2R)-2-phosphoglycerate = phosphoenolpyruvate + H2O. Its pathway is carbohydrate degradation; glycolysis; pyruvate from D-glyceraldehyde 3-phosphate: step 4/5. In terms of biological role, catalyzes the reversible conversion of 2-phosphoglycerate (2-PG) into phosphoenolpyruvate (PEP). It is essential for the degradation of carbohydrates via glycolysis. In Saccharolobus islandicus (strain Y.N.15.51 / Yellowstone #2) (Sulfolobus islandicus), this protein is Enolase.